The following is a 911-amino-acid chain: General transcription factor 3C polypeptide 2 (911 aa).

Disordered stretches follow at residues 34-187 (LDVK…RRRA) and 205-297 (ALPA…MAPN). Residues 35–46 (DVKTSSEMTSAE) are compositionally biased toward polar residues. A Phosphoserine modification is found at serine 63. Positions 64–81 (PDQRRLPPEQESLSRLEQ) are enriched in basic and acidic residues. The span at 92–112 (SKPRASKPGRKRGGRTRKGPK) shows a compositional bias: basic residues. The span at 114–123 (PQQPNPPSAP) shows a compositional bias: pro residues. Residues serine 132, serine 165, serine 167, serine 220, and serine 260 each carry the phosphoserine modification. A compositionally biased stretch (acidic residues) spans 253–262 (EAEDVEESEG). A compositionally biased stretch (low complexity) spans 263-275 (PSESSSEPEPAVP). WD repeat units follow at residues 465-521 (CDNG…ALLA) and 552-593 (SECG…PLQR). A Phosphoserine modification is found at serine 597. The WD 3 repeat unit spans residues 611 to 651 (AHDQAVRTLQWCKANSHFLASAGSDRKIKFWDLRRPYEPIN). Residues 765 to 785 (SPEGPDHSSASSGVPNPPKAR) are disordered. A WD 4 repeat occupies 832–874 (LQLEAIHKVRFSPNLDSYGWLVSGGQSGLVRIHFVRGLASPLG). 3 positions are modified to phosphoserine: serine 871, serine 892, and serine 893. The interval 889–911 (FQPSSPTRRPGFSPTSHRLLPTP) is disordered. Residue threonine 895 is modified to Phosphothreonine. The residue at position 901 (serine 901) is a Phosphoserine.

In terms of assembly, part of the TFIIIC subcomplex TFIIIC2, consisting of six subunits, GTF3C1, GTF3C2, GTF3C3, GTF3C4, GTF3C5 and GTF3C6.

Its subcellular location is the nucleus. Required for RNA polymerase III-mediated transcription. Component of TFIIIC that initiates transcription complex assembly on tRNA and is required for transcription of 5S rRNA and other stable nuclear and cytoplasmic RNAs. May play a direct role in stabilizing interactions of TFIIIC2 with TFIIIC1. The polypeptide is General transcription factor 3C polypeptide 2 (GTF3C2) (Pongo abelii (Sumatran orangutan)).